We begin with the raw amino-acid sequence, 423 residues long: Glutamate--cysteine ligase EgtA (423 aa).

This sequence belongs to the glutamate--cysteine ligase type 2 family. EgtA subfamily.

It carries out the reaction L-cysteine + L-glutamate + ATP = gamma-L-glutamyl-L-cysteine + ADP + phosphate + H(+). Its pathway is amino-acid biosynthesis; ergothioneine biosynthesis. Catalyzes the synthesis of gamma-glutamylcysteine (gamma-GC). This compound is used as substrate for the biosynthesis of the low-molecular thiol compound ergothioneine. In Mycolicibacterium smegmatis (strain ATCC 700084 / mc(2)155) (Mycobacterium smegmatis), this protein is Glutamate--cysteine ligase EgtA.